The chain runs to 567 residues: Urease subunit alpha (567 aa).

One can recognise a Urease domain in the interval 129–567 (GGIDAHIHFI…LPLAQLYCLF (439 aa)). Ni(2+) is bound by residues histidine 134, histidine 136, and lysine 217. Lysine 217 carries the N6-carboxylysine modification. Residue histidine 219 coordinates substrate. 2 residues coordinate Ni(2+): histidine 246 and histidine 272. Residue histidine 320 is the Proton donor of the active site. Ni(2+) is bound at residue aspartate 360.

The protein belongs to the metallo-dependent hydrolases superfamily. Urease alpha subunit family. In terms of assembly, heterotrimer of UreA (gamma), UreB (beta) and UreC (alpha) subunits. Three heterotrimers associate to form the active enzyme. Requires Ni cation as cofactor. Post-translationally, carboxylation allows a single lysine to coordinate two nickel ions.

Its subcellular location is the cytoplasm. The catalysed reaction is urea + 2 H2O + H(+) = hydrogencarbonate + 2 NH4(+). The protein operates within nitrogen metabolism; urea degradation; CO(2) and NH(3) from urea (urease route): step 1/1. This is Urease subunit alpha from Alteromonas mediterranea (strain DSM 17117 / CIP 110805 / LMG 28347 / Deep ecotype).